Reading from the N-terminus, the 271-residue chain is Shikimate dehydrogenase (NADP(+)) (271 aa).

Shikimate-binding positions include 14 to 16 and threonine 61; that span reads SLS. The active-site Proton acceptor is the lysine 65. Residues asparagine 86 and aspartate 101 each coordinate shikimate. Residues 125-129 and isoleucine 212 each bind NADP(+); that span reads GAGGA. Tyrosine 214 is a shikimate binding site. Glycine 235 is an NADP(+) binding site.

It belongs to the shikimate dehydrogenase family. Homodimer.

The catalysed reaction is shikimate + NADP(+) = 3-dehydroshikimate + NADPH + H(+). The protein operates within metabolic intermediate biosynthesis; chorismate biosynthesis; chorismate from D-erythrose 4-phosphate and phosphoenolpyruvate: step 4/7. Its function is as follows. Involved in the biosynthesis of the chorismate, which leads to the biosynthesis of aromatic amino acids. Catalyzes the reversible NADPH linked reduction of 3-dehydroshikimate (DHSA) to yield shikimate (SA). This Clostridium perfringens (strain ATCC 13124 / DSM 756 / JCM 1290 / NCIMB 6125 / NCTC 8237 / Type A) protein is Shikimate dehydrogenase (NADP(+)).